Here is a 393-residue protein sequence, read N- to C-terminus: Envelope glycoprotein D (393 aa).

The signal sequence occupies residues 1 to 25 (MGRLTSGVGTAALLVVAVGLRVVCA). Positions 25 to 57 (AKYALADPSLKMADPNRFRGKNLPVLDRLTDPP) are interaction with TNFRSF14. The Virion surface portion of the chain corresponds to 26-339 (KYALADPSLK…HHAPAAPSNP (314 aa)). Residue histidine 64 participates in Zn(2+) binding. Disulfide bonds link cysteine 91-cysteine 214, cysteine 131-cysteine 227, and cysteine 143-cysteine 152. Residues asparagine 119 and asparagine 146 are each glycosylated (N-linked (GlcNAc...) asparagine; by host). Residue aspartate 240 coordinates Zn(2+). The segment at 261 to 305 (LKIAGWHGPKPPYTSTLLPPELSDTTNATQPELVPEDPEDSALLE) is profusion. The span at 274–290 (TSTLLPPELSDTTNATQ) shows a compositional bias: polar residues. The interval 274 to 301 (TSTLLPPELSDTTNATQPELVPEDPEDS) is disordered. Asparagine 287 carries an N-linked (GlcNAc...) asparagine; by host glycan. A helical transmembrane segment spans residues 340 to 363 (GLIIGALAGSTLAVLVIGGIAFWV). Residues 364–393 (RRRAQMAPKRLRLPHIRDDDAPPSHQPLFY) are Intravirion-facing.

Belongs to the herpesviridae glycoprotein D family. In terms of assembly, homodimer. Interacts with host receptor TNFRSF14. Interacts with host receptor NECTIN1. Interacts with host receptor NECTIN2. Interacts (via profusion domain) with gB; this interaction occurs in the absence of gH/gL. Interacts (via profusion domain) with gH/gL heterodimer; this interaction occurs in the absence of gB. Associates with the gB-gH/gL-gD complex. Interacts (via C-terminus) with UL11 tegument protein.

The protein localises to the virion membrane. Functionally, envelope glycoprotein that binds to the host cell entry receptors NECTIN1, NECTIN2 and TNFRSF14/HVEM, promoting the virus entry into host cells. May trigger fusion with host membrane, by recruiting the fusion machinery composed of gB and gH/gL. In Homo sapiens (Human), this protein is Envelope glycoprotein D (gD).